The sequence spans 108 residues: MVIRGVGIDIVSMSRFEKVYAKHGQRFIAEFFAEEEQSMPLASLAARFAAKEAVKKALNTPSILFKNIVIGSPAREAKIVGQEIQGRVWVSISHEKDNAVAIAIWEAD.

Residues D9 and E52 each contribute to the Mg(2+) site.

It belongs to the P-Pant transferase superfamily. AcpS family. Requires Mg(2+) as cofactor.

Its subcellular location is the cytoplasm. It catalyses the reaction apo-[ACP] + CoA = holo-[ACP] + adenosine 3',5'-bisphosphate + H(+). Transfers the 4'-phosphopantetheine moiety from coenzyme A to a Ser of acyl-carrier-protein. This Coprothermobacter proteolyticus (strain ATCC 35245 / DSM 5265 / OCM 4 / BT) protein is Holo-[acyl-carrier-protein] synthase.